Reading from the N-terminus, the 313-residue chain is Carbamate kinase 2 (313 aa).

This sequence belongs to the carbamate kinase family.

It localises to the cytoplasm. It catalyses the reaction hydrogencarbonate + NH4(+) + ATP = carbamoyl phosphate + ADP + H2O + H(+). The protein operates within metabolic intermediate metabolism; carbamoyl phosphate degradation; CO(2) and NH(3) from carbamoyl phosphate: step 1/1. The protein is Carbamate kinase 2 (arcC2) of Staphylococcus aureus (strain USA300).